The following is a 120-amino-acid chain: Eukaryotic translation initiation factor 4E-binding protein 2 (120 aa).

2 positions are modified to phosphothreonine; by MTOR: Thr37 and Thr46. The YXXXXLphi motif motif lies at 54–60; the sequence is YDRKFLL. Ser65 bears the Phosphoserine; by MTOR mark. Position 70 is a phosphothreonine; by MTOR (Thr70). Position 83 is a phosphoserine (Ser83). Residues Asn99 and Asn102 each carry the deamidated asparagine modification. A TOS motif motif is present at residues 116 to 120; it reads FEMDI.

The protein belongs to the eIF4E-binding protein family. Hypophosphorylated EIF4EBP2 interacts with EIF4E; phosphorylation of EIF4EBP2 by mTORC1 causes dissociation of the complex allowing EIF4G1/EIF4G3 to bind and consequent initiation of translation. Interacts (via TOS motif) with RPTOR; promoting phosphorylation by mTORC1. Interacts with PCMT1; required to prevent isoaspartate accumulation and convert isoaspartate to Asp. In terms of processing, phosphorylation at Thr-37, Thr-46, Ser-65, Thr-70 and Ser-83 is mediated by MTOR and corresponds to the hyperphosphorylated form: it abolishes binding to EIF4E by inducing folding of intrinsically disordered regions. First phosphorylated at Thr-37 and Thr-46 by MTOR, inducing folding of region encompassing residues from Pro-18 to Arg-62 of into a four-stranded beta-domain that sequesters the helical YXXXXLPhi motif into a partly buried beta-strand, blocking accessibility to EIF4E. Protein phosphorylated at Thr-37 and Thr-46 is however unstable and subsequent phosphorylation at Ser-65, Thr-70 and Ser-83 is required to stabilize the fold, decreasing affinity for EIF4E by a factor of 4000. Phosphorylated in response to insulin, EGF and PDGF. Deamidated at Asn-99 and Asn-102 to aspartate (Asp) in brain. Deamidation promotes interaction with RPTOR, subsequent phosphorylation by mTORC1 and increased translation, leading to impair kinetics of excitatory synaptic transmission. Deamidation takes place during postnatal development, when the PI3K-Akt-mTOR signaling is reduced, suggesting it acts as a compensatory mechanism to promote translation despite attenuated PI3K-Akt-mTOR signaling in neuron development. Deamidation converts Asn residues into a mixture of Asp and isoaspartate; interactions with PCMT1 is required to prevent isoaspartate accumulation and convert isoaspartate to Asp. Enriched in brain.

Its subcellular location is the cytoplasm. The protein resides in the nucleus. Repressor of translation initiation involved in synaptic plasticity, learning and memory formation. Regulates EIF4E activity by preventing its assembly into the eIF4F complex: hypophosphorylated form of EIF4EBP2 competes with EIF4G1/EIF4G3 and strongly binds to EIF4E, leading to repress translation. In contrast, hyperphosphorylated form dissociates from EIF4E, allowing interaction between EIF4G1/EIF4G3 and EIF4E, leading to initiation of translation. EIF4EBP2 is enriched in brain and acts as a regulator of synapse activity and neuronal stem cell renewal via its ability to repress translation initiation. Mediates the regulation of protein translation by hormones, growth factors and other stimuli that signal through the MAP kinase and mTORC1 pathways. This Mus musculus (Mouse) protein is Eukaryotic translation initiation factor 4E-binding protein 2.